A 369-amino-acid polypeptide reads, in one-letter code: DNA replication and repair protein RecF (369 aa).

Residue 30 to 37 (GENGQGKT) participates in ATP binding.

The protein belongs to the RecF family.

It localises to the cytoplasm. Its function is as follows. The RecF protein is involved in DNA metabolism; it is required for DNA replication and normal SOS inducibility. RecF binds preferentially to single-stranded, linear DNA. It also seems to bind ATP. The polypeptide is DNA replication and repair protein RecF (Anaeromyxobacter sp. (strain Fw109-5)).